Here is a 172-residue protein sequence, read N- to C-terminus: MQEALLKCVHEVLSATAGTKAEGVYFIGMTVKGSVVHRKIDVVVDADSGVRIDQCAFLSRRLRERLEEDEEMIGILGDNFDLVVGSPGLGEPIILDRQYGRHVGRLLRVSYSDLEGVEHELTGHLLEVSLAEGAGSIMLKPRVEKKKGKGEELENITLELGAVLRAVPEAEI.

It belongs to the RimP family.

Its subcellular location is the cytoplasm. In terms of biological role, required for maturation of 30S ribosomal subunits. The sequence is that of Ribosome maturation factor RimP from Chlorobium phaeovibrioides (strain DSM 265 / 1930) (Prosthecochloris vibrioformis (strain DSM 265)).